Reading from the N-terminus, the 101-residue chain is Iron-sulfur cluster assembly protein CyaY (101 aa).

The protein belongs to the frataxin family.

Its function is as follows. Involved in iron-sulfur (Fe-S) cluster assembly. May act as a regulator of Fe-S biogenesis. This chain is Iron-sulfur cluster assembly protein CyaY, found in Rickettsia felis (strain ATCC VR-1525 / URRWXCal2) (Rickettsia azadi).